Here is a 460-residue protein sequence, read N- to C-terminus: Sexual development regulator velC (460 aa).

3 disordered regions span residues 67–131 (VGPD…PQAP), 152–216 (YAPR…RPDP), and 422–460 (KKGN…SARQ). Polar residues predominate over residues 192–207 (PVTTNGRPPDSNSPMV). A Velvet domain is found at 239–422 (LSDNRFNLQI…KEQGCIISIK (184 aa)). Residues 423 to 437 (KGNDRSKNTRSHDDS) are compositionally biased toward basic and acidic residues. Basic residues predominate over residues 451–460 (GKRRRRSARQ).

The protein belongs to the velvet family. VelC subfamily. Interacts with VE1.

Its subcellular location is the nucleus. Its function is as follows. Velvet-domain-containing protein that acts as a positive regulator of sexual development. Dispensable for regulation of conidial size, hyphal hydrophobicity, fumonisin production, and oxidant resistance. This Gibberella moniliformis (strain M3125 / FGSC 7600) (Maize ear and stalk rot fungus) protein is Sexual development regulator velC.